We begin with the raw amino-acid sequence, 493 residues long: Cytoplasmic tRNA 2-thiolation protein 2 (493 aa).

Position 489 is a phosphoserine (Ser-489).

This sequence belongs to the CTU2/NCS2 family. In terms of assembly, interacts with NCS6 and URM1. May act by forming a heterodimer with NCS6.

The protein resides in the cytoplasm. It participates in tRNA modification; 5-methoxycarbonylmethyl-2-thiouridine-tRNA biosynthesis. Functionally, plays a central role in 2-thiolation of mcm(5)S(2)U at tRNA wobble positions of tRNA(Lys), tRNA(Glu) and tRNA(Gln). May act by forming a heterodimer with NCS6 that ligates sulfur from thiocarboxylated URM1 onto the uridine of tRNAs at wobble position. Prior mcm(5) tRNA modification by the elongator complex is required for 2-thiolation. May also be involved in protein urmylation. The polypeptide is Cytoplasmic tRNA 2-thiolation protein 2 (Saccharomyces cerevisiae (strain YJM789) (Baker's yeast)).